We begin with the raw amino-acid sequence, 247 residues long: Capsid protein (247 aa).

The segment at 1–40 (MWGTSNCACAKFQIRRRYARPYRRRHIRRYRRRRRHFRRR) is DNA-binding. The tract at residues 15–44 (RRRYARPYRRRHIRRYRRRRRHFRRRRFTT) is nuclear localization signals.

This sequence belongs to the circoviridae capsid protein family. As to quaternary structure, homomultimer. Assembles in the nucleus, presumably in an immature form, then migrates to the cytoplasm once assembled as mature virion. Interacts with Rep; this interaction relocates Rep into the nucleus.

The protein resides in the host nucleus. The protein localises to the virion. Self-assembles to form the virion icosahedral capsid with a T=1 symmetry. This very small capsid (17 - 22 nm in diameter) allows the virus to be very stable in the environment and resistant to some disinfectants, including detergents. Essential for the initial attachment to heparan sulfate moieties and chondroitin sulfate B of the host cell surface proteoglycans. After attachment, the virus is endocytosed and traffics to the nucleus. The capsid protein binds and transports the viral genome and Rep across the nuclear envelope. This Beak and feather disease virus (BFDV) protein is Capsid protein (Cap).